Consider the following 33-residue polypeptide: Defensin-1 (33 aa).

3 disulfides stabilise this stretch: Cys-4–Cys-32, Cys-6–Cys-21, and Cys-11–Cys-31.

The protein belongs to the alpha-defensin family.

The protein resides in the secreted. Its function is as follows. Has antibacterial activity against the Gram-negative bacterium E.coli and the Gram-positive bacteria L.monocytogenes and S.aureus. Has antifungal activity against C.albicans. In Papio hamadryas (Hamadryas baboon), this protein is Defensin-1.